Consider the following 226-residue polypeptide: MSLSDFYVTGTDTGIGKTFVSCILLHMLRGRGQRAVGMKPVASGCTYSDTGWRNEDALALQAASDPTPAYDLINPYALPAAVAPEIAAIEAGVTVALEPLSASFTQLRAQADVVVVEGVGGWATPLNATFDQATLVRALEIPVVLVVGLRLGCMNHARLSTAAIMADGLRCIGWIANTIDPHMARIEENLALLRQRLPIPYWGHLPHIPPGINPATLATRLHPQGD.

Residue 14–19 participates in ATP binding; sequence GIGKTF. T18 contacts Mg(2+). K39 is an active-site residue. Residue S43 coordinates substrate. Residues D56, 117-120, 177-178, 206-208, and N213 each bind ATP; these read EGVG, NT, and PHI. The Mg(2+) site is built by D56 and E117.

It belongs to the dethiobiotin synthetase family. As to quaternary structure, homodimer. Mg(2+) serves as cofactor.

The protein resides in the cytoplasm. The enzyme catalyses (7R,8S)-7,8-diammoniononanoate + CO2 + ATP = (4R,5S)-dethiobiotin + ADP + phosphate + 3 H(+). It participates in cofactor biosynthesis; biotin biosynthesis; biotin from 7,8-diaminononanoate: step 1/2. Catalyzes a mechanistically unusual reaction, the ATP-dependent insertion of CO2 between the N7 and N8 nitrogen atoms of 7,8-diaminopelargonic acid (DAPA, also called 7,8-diammoniononanoate) to form a ureido ring. This is ATP-dependent dethiobiotin synthetase BioD from Xylella fastidiosa (strain Temecula1 / ATCC 700964).